The following is a 399-amino-acid chain: Probable dual-specificity RNA methyltransferase RlmN (399 aa).

The active-site Proton acceptor is the Glu-97. Positions 103 to 381 (YPDRATVCVS…CTVRVERGVS (279 aa)) constitute a Radical SAM core domain. Cys-110 and Cys-386 are joined by a disulfide. Positions 117, 121, and 124 each coordinate [4Fe-4S] cluster. S-adenosyl-L-methionine-binding positions include 203–204 (GE), Ser-235, 258–260 (SLH), and Asn-343. Catalysis depends on Cys-386, which acts as the S-methylcysteine intermediate.

It belongs to the radical SAM superfamily. RlmN family. [4Fe-4S] cluster serves as cofactor.

The protein resides in the cytoplasm. It catalyses the reaction adenosine(2503) in 23S rRNA + 2 reduced [2Fe-2S]-[ferredoxin] + 2 S-adenosyl-L-methionine = 2-methyladenosine(2503) in 23S rRNA + 5'-deoxyadenosine + L-methionine + 2 oxidized [2Fe-2S]-[ferredoxin] + S-adenosyl-L-homocysteine. The enzyme catalyses adenosine(37) in tRNA + 2 reduced [2Fe-2S]-[ferredoxin] + 2 S-adenosyl-L-methionine = 2-methyladenosine(37) in tRNA + 5'-deoxyadenosine + L-methionine + 2 oxidized [2Fe-2S]-[ferredoxin] + S-adenosyl-L-homocysteine. In terms of biological role, specifically methylates position 2 of adenine 2503 in 23S rRNA and position 2 of adenine 37 in tRNAs. The polypeptide is Probable dual-specificity RNA methyltransferase RlmN (Roseiflexus sp. (strain RS-1)).